The sequence spans 162 residues: D-aminoacyl-tRNA deacylase (162 aa).

The Gly-cisPro motif, important for rejection of L-amino acids signature appears at 145–146 (GP).

This sequence belongs to the DTD family. Homodimer.

It is found in the cytoplasm. It catalyses the reaction glycyl-tRNA(Ala) + H2O = tRNA(Ala) + glycine + H(+). The enzyme catalyses a D-aminoacyl-tRNA + H2O = a tRNA + a D-alpha-amino acid + H(+). Functionally, an aminoacyl-tRNA editing enzyme that deacylates mischarged D-aminoacyl-tRNAs. Also deacylates mischarged glycyl-tRNA(Ala), protecting cells against glycine mischarging by AlaRS. Acts via tRNA-based rather than protein-based catalysis; rejects L-amino acids rather than detecting D-amino acids in the active site. By recycling D-aminoacyl-tRNA to D-amino acids and free tRNA molecules, this enzyme counteracts the toxicity associated with the formation of D-aminoacyl-tRNA entities in vivo and helps enforce protein L-homochirality. The chain is D-aminoacyl-tRNA deacylase from Bifidobacterium longum (strain NCC 2705).